The chain runs to 1678 residues: Hispidin synthase (1678 aa).

The tract at residues 33-453 (GEHRWSYREL…WLGRNTDFIQ (421 aa)) is adenylation (A) domain. A Carrier 1 domain is found at 586–661 (DELSNTVKHI…SLSNAVYAKL (76 aa)). O-(pantetheine 4'-phosphoryl)serine is present on Ser-620. The Ketosynthase family 3 (KS3) domain maps to 683–1108 (GKEIVVVGQA…GTLGGIVLEA (426 aa)). Active-site for beta-ketoacyl synthase activity residues include Cys-852, His-988, and His-1029. Residues 1201-1499 (YKRGALAFAF…VAWSLLLSNG (299 aa)) are malonyl-CoA:ACP transacylase (MAT) domain. The interval 1562–1582 (EETLSSGSSTPTLENTDLDSG) is disordered. Residues 1564–1576 (TLSSGSSTPTLEN) are compositionally biased toward polar residues. The Carrier 2 domain occupies 1597 to 1672 (DDLRDSIVSS…EMVSNLVEQA (76 aa)). O-(pantetheine 4'-phosphoryl)serine is present on Ser-1632.

In the N-terminal section; belongs to the NRP synthetase family.

It catalyses the reaction (E)-caffeate + 2 malonyl-CoA + ATP + H(+) = hispidin + AMP + 2 CO2 + diphosphate + 2 CoA. It participates in secondary metabolite biosynthesis. PKS-NRPS hybrid synthetase; part of the gene cluster that mediates the fungal bioluminescence cycle. Performs the biosynthesis of hispidin from caffeic acid by two cycles of addition of malonyl units followed by lactonization. The fungal bioluminescence cycle begins with the hispidin synthetase that catalyzes the formation of hispidin which is further hydroxylated by the hispidin-3-hydroxylase, yielding the fungal luciferin 3-hydroxyhispidin. The luciferase then produces an endoperoxide as a high-energy intermediate with decomposition that yields oxyluciferin (also known as caffeoylpyruvate) and light emission. Oxyluciferin can be recycled to caffeic acid by caffeoylpyruvate hydrolase. This chain is Hispidin synthase, found in Neonothopanus nambi (Agaricus nambi).